Here is a 2242-residue protein sequence, read N- to C-terminus: MKVTQASCHQGDIARFGARAGNQCVCNGIMFLHALHLGGTSAVLQTEALDAIMEEGARLDARLERELQKKLPAGGRLPVYRLGDEVPRRLESRFGRTVHALSRPFNGTTETCDLDGYMCPGIFDFLRYAHAKPRPTYVLVTVNSLARAVVFTEDHMLVFDPHSSAECHNAAVYHCEGLHQVLMVLTGFGVQLSPAFYYEALFLYMLDVATVPEAEIAARLVSTYRDRDIDLTGVVRESADTAATTTTAAPSLPPLPDPIVDPGCPPGVAPSIPVYDPSSSPKKTPEKRRKDLSGSKHGGKKKPPSTTSKTLATASSSSPSAIAAASSSSAVPPSYSCGEGALPALGRYQQLVDEVEQELKALTLPPLPANTSAWTLHAAGTESGANAATATAPSFDEAFLTDRLQQLIIHAVNQRSCLRRPCGPQSAAQQAVRAYLGLSKKLDAFLLNWLHHGLDLRRMHDYLSHKTTKGTYSTLDRALLEKMQVVFDPYGRQHGPALIAWVEEMLRYVESKPTNELSQRLQRFVTKRPMPVSDSFVCLRPVDFQRLTQVIEQRRRVLQRQREEYHGVYEHLAGLITSIDIHDLDASDLNRREILKALQPLDDNAKQELFRLGNAKMLELQMDLDRLSTQLLTRVHNHILNGFLPVEDLKQMERVVEQVLRLFYDLRDLKLCDGSYEEGFVVIREQLSYLMTGTVRDNVPLLQEILQLRHAYQQATQQNEGRLTQIHDLLHVIETLVRDPGSRGSALTLALVQEQLAQLEALGGLQLPEVQQRLQNAQLALSRLYEEEEETQRFLDGLSYDDPPTEQTIKRHPQLREMLRRDEQTRLRLINAVLSMFHTLVMRLARDESPRPTFFDAVSLLLQQLPPDSHEREDLRAANATYAQMVKKLEQIEKAGTGASEKRFQALRELVYFFRNHEYFFQHMVGRLGVGPQVTELYERYQHEMEEQHLERLEREWQEEAGKLTVTSVEDVQRVLARAPSHRVMHQMQQTLTTKMQDFLDKEKRKQEEQQRQLLDGYQKKVQQDLQRVVDAVKGEMLSTIPHQPLEATLELLLGLDQRAQPLLDKFNQDLLSALQQLSKKLDGRINECLHGVLTGDVERRCHPHREAAMQTQASLNHLDQVLGPQLLIHETQQALQHAVHQAQFIEKCQQGDPTTAITGSEFESDFARYRSSQQKMEGQLQETRQQMTETSERLDRSLRQDPGSSSVTRVPEKPFKGQELAGRITPPPVDFQRPVFKTLLDQQADAARKALSDEADLLNQKVQTQLRQRDEQLSTAQNLWTDLVTRHKMSGGLDVTTPDAKALMEKPLETLRELLGKATQQLPYLSAERTVRWMLAFLEEALAQITADPTHPHHGSRTHYRNLQQQAVESAVTLAHQIEQNAACENFIAQHQEATANGASTPRVDMVQAVEAVWQRLEPGRVAGGAARHQKVQELLQRLGQTLGDLELQETLATEYFALLHGIQTFSYGLDFRSQLEKIRDLRTRFAELAKRRGTRLSNEGALPNPRKPQATTSLGAFTRGLNALERHVQLGHQYLLNKLNGSSLVYRLEDIPSVLPPTHETDPALIMRDRLRRLCFARHHDTFLEVVDVFGMRQIVTQAGEPIHLVTDYGNVAFKYLALRDDGRPLAWRRRCSGGGLKNVVTTRYKAITVAVAVCQTLRTFWPQISQYDLRPYLTQHQSHTHPAETHTLHNLKLFCYLVSTAWHQRIDTQQELTAADRVGSGEGGDVGEQRPGRGTVLRLSLQEFCVLIAALYPEYIYTVLKYPVQMSLPSLTAHLHQDVIHAVVNNTHKMPPDHLPEQVKAFCITPTQWPAMQLNKLFWENKLVQQLCQVGPQKSTPPLGKLWLYAMATLVFPQDMLQCLWLELKPQYAETYASVSELVQTLFQIFTQQCEMVTEGYTQPQLPTGEPVLQMIRVRRQDTTTTDTNTTTEPGLLDVFIQTETALDYALGSWLFGIPVCLGVHVADLLKGQRVLVARHLEYTSRDRDFLRIQRSRDLNLSQLLQDTWTETPLEHCWLQAQIRRLRDYLRFPTRLEFIPLVIYNAQDHTVVRVLRPPSTFEQDHSRLVLDEAFPIFPLYDQDDNSSADNVAASGAAPTPPVPFNRVPVNIQFLRENPPPIARVQQPPRRHRHRAAAAADDDGQIDHVQDDTSRTADSALVSTAFGGSVFQENRLGETPLCRDELVAVAPGAASTSFASPPITVLTQNVLSALEILRLVRLNLRQLAQSVQDTIQHMRFLYLL.

Residues 1-238 form a deubiquitination activity region; sequence MKVTQASCHQ…IDLTGVVRES (238 aa). Positions 4–226 constitute a Peptidase C76 domain; the sequence is TQASCHQGDI…AARLVSTYRD (223 aa). Catalysis depends on residues Cys-24, Asp-160, and His-162. The interval 239–318 is disordered; the sequence is ADTAATTTTA…KTLATASSSS (80 aa). Residues 240-250 show a composition bias toward low complexity; sequence DTAATTTTAAP. The span at 251 to 268 shows a compositional bias: pro residues; it reads SLPPLPDPIVDPGCPPGV. Residues 304 to 318 show a composition bias toward low complexity; that stretch reads PSTTSKTLATASSSS. Residues 328–332 form an interaction with inner tegument protein region; sequence SSAVP. Polar residues predominate over residues 1173–1190; sequence SQQKMEGQLQETRQQMTE. Residues 1173 to 1229 are disordered; that stretch reads SQQKMEGQLQETRQQMTETSERLDRSLRQDPGSSSVTRVPEKPFKGQELAGRITPPP. Basic and acidic residues predominate over residues 1191-1200; that stretch reads TSERLDRSLR.

It belongs to the herpesviridae large tegument protein family. Interacts with host CUL1 and CUL4A; these interactions inhibit the E3 ligase activity of cullins. Interacts with inner tegument protein. Interacts with capsid vertex specific component CVC2. Interacts with the major capsid protein/MCP.

It localises to the virion tegument. The protein resides in the host cytoplasm. The protein localises to the host nucleus. The enzyme catalyses Thiol-dependent hydrolysis of ester, thioester, amide, peptide and isopeptide bonds formed by the C-terminal Gly of ubiquitin (a 76-residue protein attached to proteins as an intracellular targeting signal).. Functionally, large tegument protein that plays multiple roles in the viral cycle. During viral entry, remains associated with the capsid while most of the tegument is detached and participates in the capsid transport toward the host nucleus. Plays a role in the routing of the capsid at the nuclear pore complex and subsequent uncoating. Within the host nucleus, acts as a deneddylase and promotes the degradation of nuclear CRLs (cullin-RING ubiquitin ligases) and thereby stabilizes nuclear CRL substrates, while cytoplasmic CRLs remain unaffected. These modifications prevent host cell cycle S-phase progression and create a favorable environment allowing efficient viral genome replication. Participates later in the secondary envelopment of capsids. Indeed, plays a linker role for the association of the outer viral tegument to the capsids together with the inner tegument protein. The sequence is that of Large tegument protein deneddylase from Homo sapiens (Human).